The sequence spans 464 residues: Argininosuccinate lyase (464 aa).

The protein belongs to the lyase 1 family. Argininosuccinate lyase subfamily.

It localises to the cytoplasm. The catalysed reaction is 2-(N(omega)-L-arginino)succinate = fumarate + L-arginine. It functions in the pathway amino-acid biosynthesis; L-arginine biosynthesis; L-arginine from L-ornithine and carbamoyl phosphate: step 3/3. In Herminiimonas arsenicoxydans, this protein is Argininosuccinate lyase.